A 237-amino-acid chain; its full sequence is DCN1-like protein 5 (237 aa).

Phosphoserine is present on Ser-41. The 187-residue stretch at 46–232 (FSRKKCLAWF…LLDEFVEWQK (187 aa)) folds into the DCUN1 domain.

As to quaternary structure, part of a complex that contains DCUN1D5, CUL1 and RBX1; this interaction is bridged by CUL1. Interacts (via the DCUN1 domain) with the unneddylated cullins: interacts with CUL1, CUL2, CUL3, CUL4A, CUL4B and CUL5; these interactions promote the cullin neddylation and the identity of the cullin dictates the affinity of the interaction. Interacts (via DCUN1 domain) with UBE2M (N-terminally acetylated form) and probably with UBE2F (N-terminally acetylated form). May also interact with regulators or subunits of cullin-RING ligases such as RBX1, RNF7, ELOB and DDB1; these interactions are bridged by cullins. Interacts with CAND1; this interaction is bridged by cullins and strongly inhibits the neddylation of cullins. These CAND-cullin-DCNL complexes can only be neddylated in the presence of a substrate adapter. Phosphorylation at Ser-41 is independent of cullin's interaction. Phosphorylated in response to both TICAM1 and MYD88 dependent Toll-like receptor (TLR) pathway activation. Phosphorylated in response to IL1B stimulation.

It is found in the nucleus. The protein resides in the cytoplasm. It localises to the cytoskeleton. The protein localises to the spindle. Contributes to the neddylation of all cullins by transferring NEDD8 from N-terminally acetylated NEDD8-conjugating E2s enzyme to different cullin C-terminal domain-RBX complexes which is necessary for the activation of cullin-RING E3 ubiquitin ligases (CRLs). May play a role in DNA damage response and may participate in cell proliferation and anchorage-independent cell growth. The sequence is that of DCN1-like protein 5 from Rattus norvegicus (Rat).